We begin with the raw amino-acid sequence, 171 residues long: S-ribosylhomocysteine lyase (171 aa).

Positions 54, 58, and 128 each coordinate Fe cation.

This sequence belongs to the LuxS family. As to quaternary structure, homodimer. It depends on Fe cation as a cofactor.

It catalyses the reaction S-(5-deoxy-D-ribos-5-yl)-L-homocysteine = (S)-4,5-dihydroxypentane-2,3-dione + L-homocysteine. Involved in the synthesis of autoinducer 2 (AI-2) which is secreted by bacteria and is used to communicate both the cell density and the metabolic potential of the environment. The regulation of gene expression in response to changes in cell density is called quorum sensing. Catalyzes the transformation of S-ribosylhomocysteine (RHC) to homocysteine (HC) and 4,5-dihydroxy-2,3-pentadione (DPD). In Serratia proteamaculans (strain 568), this protein is S-ribosylhomocysteine lyase.